The chain runs to 1645 residues: Histone-lysine N-methyltransferase set-26 (1645 aa).

5 disordered regions span residues 1-82 (MADG…QQIP), 109-132 (EPAAAADSRPLTEEEQLAAERPTE), 200-228 (DAVGPGSPGTQYRRNQQTGGGLPSTSVAP), 417-606 (TPEQ…VLRP), and 651-789 (TGQS…DEAA). Composition is skewed to low complexity over residues 16–31 (EQPPLQQQQPEIAEPI) and 67–82 (QEFYQEPQIPEPQQIP). The span at 207–228 (PGTQYRRNQQTGGGLPSTSVAP) shows a compositional bias: polar residues. 2 stretches are compositionally biased toward low complexity: residues 429–443 (RQRAAPQFPAAAAQR) and 453–467 (RPGASSSRAPRPSMA). A compositionally biased stretch (basic and acidic residues) spans 559–578 (MTQEEKNAHFARLTTDKEKP). Positions 592 to 603 (PHVPPPPPPPLV) are enriched in pro residues. Residues 651–675 (TGQSGSSAAARQRTVSGSAARAQTY) show a composition bias toward polar residues. 2 stretches are compositionally biased toward basic residues: residues 684–699 (QHHHQMPMDQRKRHSS) and 731–741 (HRPRGRPKGTR). Positions 780–789 (SESEGIDEAA) are enriched in acidic residues. The PHD-type zinc-finger motif lies at 794–842 (TMRCHCGMDHGDGDTIECEGCKTWQHMACMGLTLKSNTSKYKCEMCLPR). Residues 865-904 (AAKKQKRKSEPVEQKQKSQPSTSRKSAPMALQQQPAEPRV) form a disordered region. Residues 881 to 899 (KSQPSTSRKSAPMALQQQP) are compositionally biased toward polar residues. Positions 973 to 1064 (MSNEVKRQPG…RNTEVTLPFD (92 aa)) constitute an SET domain. The span at 1099–1172 (RHRAMDHKKR…EAKERKKMEV (74 aa)) shows a compositional bias: basic and acidic residues. Disordered stretches follow at residues 1099–1333 (RHRA…SKNV), 1371–1536 (SGLL…STEG), and 1548–1645 (PLDD…TRWN). Residues 1103 to 1217 (MDHKKREAEE…GKRKEARRRS (115 aa)) adopt a coiled-coil conformation. Low complexity predominate over residues 1173–1183 (EASAAAAPESS). Residues 1188-1210 (AREERRIQQAEEMFRRQEEEGKR) show a composition bias toward basic and acidic residues. Composition is skewed to polar residues over residues 1258–1268 (TTQPSTSSFAT) and 1300–1311 (TVATPKDTTASN). Composition is skewed to basic and acidic residues over residues 1382-1427 (SEVR…KKAN), 1434-1450 (KSEKAVEKAVEKVEKKP), and 1468-1485 (KKTEEVDGIEREASESSS). A compositionally biased stretch (polar residues) spans 1554–1565 (SSSNTAPTTTIA).

It belongs to the class V-like SAM-binding methyltransferase superfamily. As to expression, expressed both in the germline and in somatic tissues.

Its subcellular location is the nucleus. The catalysed reaction is L-lysyl(9)-[histone H3] + 3 S-adenosyl-L-methionine = N(6),N(6),N(6)-trimethyl-L-lysyl(9)-[histone H3] + 3 S-adenosyl-L-homocysteine + 3 H(+). In terms of biological role, histone methyltransferase that mediates trimethylation of 'Lys-9' of histone H3 in vitro. Involved in transcriptional regulation. Plays a role in the negative regulation of lifespan and in heat resistance. Together with set-9, negatively regulates lifespan in a germline-independent, partially daf-16-dependent fashion. Together with set-9, plays a role in germline development and maintenance and might play a role in the restriction of the trimethylation mark on histone H3 'Lys-4'(H3K4me3) to target genes specifically in the germline. Together with spr-5, required for transgenerational fertility. The sequence is that of Histone-lysine N-methyltransferase set-26 from Caenorhabditis elegans.